An 85-amino-acid polypeptide reads, in one-letter code: Small ribosomal subunit protein uS17 (85 aa).

This sequence belongs to the universal ribosomal protein uS17 family. Part of the 30S ribosomal subunit.

One of the primary rRNA binding proteins, it binds specifically to the 5'-end of 16S ribosomal RNA. The protein is Small ribosomal subunit protein uS17 of Pseudoalteromonas translucida (strain TAC 125).